A 208-amino-acid chain; its full sequence is Recombination protein RecR (208 aa).

The C4-type zinc-finger motif lies at cysteine 60–cysteine 75. The Toprim domain maps to serine 83–serine 178.

This sequence belongs to the RecR family.

Functionally, may play a role in DNA repair. It seems to be involved in an RecBC-independent recombinational process of DNA repair. It may act with RecF and RecO. This chain is Recombination protein RecR, found in Parabacteroides distasonis (strain ATCC 8503 / DSM 20701 / CIP 104284 / JCM 5825 / NCTC 11152).